The primary structure comprises 440 residues: Microtubule-associated tumor suppressor 1 homolog A (440 aa).

The segment at 44–67 (KSRTNSKNPQPPTNGQPDLVPPES) is disordered. Residues 69 to 401 (SRNVEYYKAQ…RLSMENEELL (333 aa)) are a coiled coil. Residues 407-440 (GDLNSPRKISPSPSLNLQSPRTSGMFSSPPVSPR) form a disordered region. Positions 417–432 (PSPSLNLQSPRTSGMF) are enriched in polar residues.

This sequence belongs to the MTUS1 family. Homodimer.

Its subcellular location is the mitochondrion. It localises to the golgi apparatus. It is found in the cell membrane. The protein localises to the nucleus. Its function is as follows. May inhibit cell proliferation. This chain is Microtubule-associated tumor suppressor 1 homolog A (mtus1a), found in Danio rerio (Zebrafish).